We begin with the raw amino-acid sequence, 167 residues long: MINVEIVRHYNKWREHKQINKSLIKKITQNILLRFDNFSKIKQFELSILLTNAAEILILNKQFRNIEKATNVLSFPSNELNWQDLYSKLEFLGDSDYMHLGDIAFCYEVIYNESCEQHKTFENHFIHLLIHSILHLIGFDHQNDTEANIMENLEIEILSYFGIFPPY.

Residues histidine 131, histidine 135, and histidine 141 each contribute to the Zn(2+) site.

It belongs to the endoribonuclease YbeY family. Zn(2+) serves as cofactor.

The protein localises to the cytoplasm. Single strand-specific metallo-endoribonuclease involved in late-stage 70S ribosome quality control and in maturation of the 3' terminus of the 16S rRNA. The chain is Endoribonuclease YbeY from Rickettsia rickettsii (strain Iowa).